The following is a 238-amino-acid chain: Transcription termination/antitermination protein NusG (238 aa).

This sequence belongs to the NusG family.

Its function is as follows. Participates in transcription elongation, termination and antitermination. The chain is Transcription termination/antitermination protein NusG from Mycobacterium tuberculosis (strain CDC 1551 / Oshkosh).